We begin with the raw amino-acid sequence, 174 residues long: uncharacterized protein (174 aa).

Residues 78–97 (TFGRNIKTPDISNPTRARNE) are disordered.

This sequence to yeast YMR295c.

This is an uncharacterized protein from Saccharomyces cerevisiae (strain ATCC 204508 / S288c) (Baker's yeast).